The following is a 231-amino-acid chain: 5'-methylthioadenosine/S-adenosylhomocysteine nucleosidase (231 aa).

The Proton acceptor role is filled by glutamate 12. Residues glycine 78, valine 153, and 174–175 (ME) each bind substrate. Aspartate 198 (proton donor) is an active-site residue.

The protein belongs to the PNP/UDP phosphorylase family. MtnN subfamily.

It carries out the reaction S-adenosyl-L-homocysteine + H2O = S-(5-deoxy-D-ribos-5-yl)-L-homocysteine + adenine. It catalyses the reaction S-methyl-5'-thioadenosine + H2O = 5-(methylsulfanyl)-D-ribose + adenine. The catalysed reaction is 5'-deoxyadenosine + H2O = 5-deoxy-D-ribose + adenine. It functions in the pathway amino-acid biosynthesis; L-methionine biosynthesis via salvage pathway; S-methyl-5-thio-alpha-D-ribose 1-phosphate from S-methyl-5'-thioadenosine (hydrolase route): step 1/2. Catalyzes the irreversible cleavage of the glycosidic bond in both 5'-methylthioadenosine (MTA) and S-adenosylhomocysteine (SAH/AdoHcy) to adenine and the corresponding thioribose, 5'-methylthioribose and S-ribosylhomocysteine, respectively. Also cleaves 5'-deoxyadenosine, a toxic by-product of radical S-adenosylmethionine (SAM) enzymes, into 5-deoxyribose and adenine. The sequence is that of 5'-methylthioadenosine/S-adenosylhomocysteine nucleosidase from Vibrio cholerae serotype O1 (strain ATCC 39315 / El Tor Inaba N16961).